A 336-amino-acid chain; its full sequence is Holliday junction branch migration complex subunit RuvB (336 aa).

The interval 4-184 (ADRLISASGG…FGIVQRLEFY (181 aa)) is large ATPase domain (RuvB-L). ATP is bound by residues Ile23, Arg24, Gly65, Lys68, Thr69, Thr70, 131–133 (EDY), Arg174, Tyr184, and Arg221. Thr69 serves as a coordination point for Mg(2+). Positions 185-255 (NVKDLTDIVA…IAARAMDMLD (71 aa)) are small ATPAse domain (RuvB-S). The segment at 258–336 (NEGFDFMDRK…HFGLQRPDEG (79 aa)) is head domain (RuvB-H). Residues Arg313 and Arg318 each coordinate DNA.

Belongs to the RuvB family. As to quaternary structure, homohexamer. Forms an RuvA(8)-RuvB(12)-Holliday junction (HJ) complex. HJ DNA is sandwiched between 2 RuvA tetramers; dsDNA enters through RuvA and exits via RuvB. An RuvB hexamer assembles on each DNA strand where it exits the tetramer. Each RuvB hexamer is contacted by two RuvA subunits (via domain III) on 2 adjacent RuvB subunits; this complex drives branch migration. In the full resolvosome a probable DNA-RuvA(4)-RuvB(12)-RuvC(2) complex forms which resolves the HJ.

Its subcellular location is the cytoplasm. It carries out the reaction ATP + H2O = ADP + phosphate + H(+). In terms of biological role, the RuvA-RuvB-RuvC complex processes Holliday junction (HJ) DNA during genetic recombination and DNA repair, while the RuvA-RuvB complex plays an important role in the rescue of blocked DNA replication forks via replication fork reversal (RFR). RuvA specifically binds to HJ cruciform DNA, conferring on it an open structure. The RuvB hexamer acts as an ATP-dependent pump, pulling dsDNA into and through the RuvAB complex. RuvB forms 2 homohexamers on either side of HJ DNA bound by 1 or 2 RuvA tetramers; 4 subunits per hexamer contact DNA at a time. Coordinated motions by a converter formed by DNA-disengaged RuvB subunits stimulates ATP hydrolysis and nucleotide exchange. Immobilization of the converter enables RuvB to convert the ATP-contained energy into a lever motion, pulling 2 nucleotides of DNA out of the RuvA tetramer per ATP hydrolyzed, thus driving DNA branch migration. The RuvB motors rotate together with the DNA substrate, which together with the progressing nucleotide cycle form the mechanistic basis for DNA recombination by continuous HJ branch migration. Branch migration allows RuvC to scan DNA until it finds its consensus sequence, where it cleaves and resolves cruciform DNA. This is Holliday junction branch migration complex subunit RuvB from Aeromonas hydrophila subsp. hydrophila (strain ATCC 7966 / DSM 30187 / BCRC 13018 / CCUG 14551 / JCM 1027 / KCTC 2358 / NCIMB 9240 / NCTC 8049).